The chain runs to 63 residues: Large ribosomal subunit protein bL28 (63 aa).

Belongs to the bacterial ribosomal protein bL28 family.

This chain is Large ribosomal subunit protein bL28, found in Clostridium beijerinckii (strain ATCC 51743 / NCIMB 8052) (Clostridium acetobutylicum).